We begin with the raw amino-acid sequence, 666 residues long: Endogenous retrovirus group K member 6 Gag polyprotein (666 aa).

Gly2 carries the N-myristoyl glycine lipid modification. Residues 165 to 264 (GKGPELVGPS…APPSRQGSKL (100 aa)) are disordered. Residues 232 to 247 (GMPPAPQGRAPYPQPP) are compositionally biased toward pro residues. CCHC-type zinc fingers lie at residues 544-561 (RKCY…NCPV) and 580-597 (DLCP…QCRS). The disordered stretch occupies residues 598–642 (KFDKNGQPLSGNEQRGQPQAPQQTGAFPIQPFVPQGFQGQQPPLS). A compositionally biased stretch (polar residues) spans 604 to 622 (QPLSGNEQRGQPQAPQQTG). Positions 624-640 (FPIQPFVPQGFQGQQPP) are enriched in low complexity.

Belongs to the beta type-B retroviral Gag protein family. HERV class-II K(HML-2) gag subfamily. Post-translationally, myristoylation is essential for retroviral assembly. Alteration of the glycine residue leads to a block in the budding of particles and an accumulation of Gag inside the cell. In terms of processing, specific enzymatic cleavages may yield mature proteins.

Its subcellular location is the cell membrane. Its function is as follows. The products of the Gag polyproteins of infectious retroviruses perform highly complex orchestrated tasks during the assembly, budding, maturation, and infection stages of the viral replication cycle. During viral assembly, the proteins form membrane associations and self-associations that ultimately result in budding of an immature virion from the infected cell. Gag precursors also function during viral assembly to selectively bind and package two plus strands of genomic RNA. Endogenous Gag proteins may have kept, lost or modified their original function during evolution. This chain is Endogenous retrovirus group K member 6 Gag polyprotein (ERVK-6), found in Homo sapiens (Human).